We begin with the raw amino-acid sequence, 274 residues long: Lipid phosphate phosphatase 1 (274 aa).

The Lumenal segment spans residues 1–15 (MISVMADEKHKEYFK). The chain crosses the membrane as a helical span at residues 16-33 (LYYFQYMIIGLCTILFLY). Residues 34 to 69 (SEISLVPRGQNIEFSLDDPSISKRYVPNELVGPLEC) lie on the Cytoplasmic side of the membrane. Residues 70–87 (LILSVGLSNMVVFWTCMF) traverse the membrane as a helical segment. The Lumenal segment spans residues 88-117 (DKDLLKKNRVKRLRERPDGISNDFHFMHTS). A helical transmembrane segment spans residues 118–139 (ILCLMLIISINAALTGALKLII). The tract at residues 136–144 (KLIIGNLRP) is phosphatase sequence motif I. The Cytoplasmic portion of the chain corresponds to 140 to 189 (GNLRPDFVDRCIPDLQKMSDSDSLVFGLDICKQTNKWILYEGLKSTPSGH). The interval 186–189 (PSGH) is phosphatase sequence motif II. A helical membrane pass occupies residues 190–203 (SSFIVSTMGFTYLW). At 204–214 (QRVFTTRNTRS) the chain is on the lumenal side. The chain crosses the membrane as a helical span at residues 215 to 231 (CIWCPLLALVVMVSRVI). The tract at residues 228–239 (SRVIDHRHHWYD) is phosphatase sequence motif III. The Cytoplasmic portion of the chain corresponds to 232–237 (DHRHHW). The chain crosses the membrane as a helical span at residues 238-255 (YDVVSGAVLAFLVIYCCW). The Lumenal portion of the chain corresponds to 256–274 (KWTFTNLAKRDILPSPVSV).

This sequence belongs to the PA-phosphatase related phosphoesterase family.

It localises to the golgi apparatus membrane. The catalysed reaction is a 1,2-diacyl-sn-glycerol 3-diphosphate + H2O = a 1,2-diacyl-sn-glycero-3-phosphate + phosphate + H(+). It catalyses the reaction a 1,2-diacyl-sn-glycero-3-phosphate + H2O = a 1,2-diacyl-sn-glycerol + phosphate. It carries out the reaction a 1-acyl-sn-glycero-3-phosphate + H2O = a 1-acyl-sn-glycerol + phosphate. Its activity is regulated as follows. PA phosphatase activity is magnesium ion-independent and potently inhibited by N-ethylmaleimide. Also inhibited by phenylglyoxal and propranolol. Catalyzes the dephosphorylation of diacylglycerol diphosphate (DGPP) to phosphatidate (PA) and the subsequent dephosphorylation of PA to diacylglycerol (DAG). Together with DPP1, regulates intracellular DGPP and PA levels which are phospholipid molecules believed to play a signaling role in stress response. Can also use lysophosphatidic acid (LPA) as a substrate. Substrate preference is PA &gt; DGPP &gt; LPA. This Saccharomyces cerevisiae (strain ATCC 204508 / S288c) (Baker's yeast) protein is Lipid phosphate phosphatase 1 (LPP1).